The chain runs to 88 residues: UPF0297 protein RBAM_024500 (88 aa).

This sequence belongs to the UPF0297 family.

The protein is UPF0297 protein RBAM_024500 of Bacillus velezensis (strain DSM 23117 / BGSC 10A6 / LMG 26770 / FZB42) (Bacillus amyloliquefaciens subsp. plantarum).